The primary structure comprises 131 residues: D-ribose pyranase (131 aa).

Catalysis depends on His-20, which acts as the Proton donor. Residues Asp-28, His-98, and 120–122 contribute to the substrate site; that span reads YSN.

It belongs to the RbsD / FucU family. RbsD subfamily. Homodecamer.

Its subcellular location is the cytoplasm. It catalyses the reaction beta-D-ribopyranose = beta-D-ribofuranose. It functions in the pathway carbohydrate metabolism; D-ribose degradation; D-ribose 5-phosphate from beta-D-ribopyranose: step 1/2. Functionally, catalyzes the interconversion of beta-pyran and beta-furan forms of D-ribose. This chain is D-ribose pyranase, found in Lactobacillus johnsonii (strain CNCM I-12250 / La1 / NCC 533).